The primary structure comprises 139 residues: Natriuretic peptide Mc-NP (139 aa).

The signal sequence occupies residues 1–25 (MVGLSRLRGGGLLLVLALLPLALDG). The propeptide occupies 26–75 (KPLEEAPTAPSRIIPFSRPVRKQSQAVLDPMVHPERPAGSGDDGDSRRLE). The interval 45-72 (VRKQSQAVLDPMVHPERPAGSGDDGDSR) is disordered. C86 and C102 are joined by a disulfide. Positions 117–139 (IIPFSRPVRKESRAALDRMQQPG) are excised as a propeptide.

This sequence belongs to the natriuretic peptide family. In terms of tissue distribution, expressed by the venom gland.

It is found in the secreted. Functionally, snake venom natriuretic peptide that dose-dependently induces the rapid relaxation of rat aortic strips phenylephrine-precontracted. Acts by stimulating cGMP production in a dose-dependent manner (by probably activating NPR1 and/or NPR2). May also show potent hypotensive effects. A synthetic peptide (AA 77-108, where the Cys-95 is replaced by a Ser) increases sodium excretion and urinary volume in rat kidneys. This Micrurus corallinus (Brazilian coral snake) protein is Natriuretic peptide Mc-NP.